We begin with the raw amino-acid sequence, 434 residues long: Mitochondrial distribution and morphology protein 12 (434 aa).

The 434-residue stretch at 1-434 folds into the SMP-LTD domain; that stretch reads MSIDIDWERA…VYPSFWTFLV (434 aa). Residues 70–83 are compositionally biased toward acidic residues; the sequence is YEEDDNENFSESSE. Disordered stretches follow at residues 70 to 141 and 181 to 275; these read YEED…LRSP and TPLG…DDLP. The segment covering 86-97 has biased composition (basic and acidic residues); the sequence is SPTREPVDRYGS. A compositionally biased stretch (polar residues) spans 215–237; the sequence is SAQSRPSTANTGNTLLSRGSMSS.

The protein belongs to the MDM12 family. In terms of assembly, component of the ER-mitochondria encounter structure (ERMES) or MDM complex, composed of MMM1, MDM10, MDM12 and MDM34. An MMM1 homodimer associates with one molecule of MDM12 on each side in a pairwise head-to-tail manner, and the SMP-LTD domains of MMM1 and MDM12 generate a continuous hydrophobic tunnel for phospholipid trafficking.

The protein localises to the mitochondrion outer membrane. The protein resides in the endoplasmic reticulum membrane. Functionally, component of the ERMES/MDM complex, which serves as a molecular tether to connect the endoplasmic reticulum (ER) and mitochondria. Components of this complex are involved in the control of mitochondrial shape and protein biogenesis, and function in nonvesicular lipid trafficking between the ER and mitochondria. MDM12 is required for the interaction of the ER-resident membrane protein MMM1 and the outer mitochondrial membrane-resident beta-barrel protein MDM10. The MDM12-MMM1 subcomplex functions in the major beta-barrel assembly pathway that is responsible for biogenesis of all mitochondrial outer membrane beta-barrel proteins, and acts in a late step after the SAM complex. The MDM10-MDM12-MMM1 subcomplex further acts in the TOM40-specific pathway after the action of the MDM12-MMM1 complex. Essential for establishing and maintaining the structure of mitochondria and maintenance of mtDNA nucleoids. The sequence is that of Mitochondrial distribution and morphology protein 12 from Blastomyces gilchristii (strain SLH14081) (Blastomyces dermatitidis).